We begin with the raw amino-acid sequence, 127 residues long: Anti-adapter protein IraD (127 aa).

Belongs to the GpW/Gp25 family. IraD subfamily. As to quaternary structure, interacts with RssB.

Its subcellular location is the cytoplasm. Functionally, inhibits RpoS proteolysis by regulating RssB activity, thereby increasing the stability of the sigma stress factor RpoS during oxidative stress. Its effect on RpoS stability is due to its interaction with RssB, which probably blocks the interaction of RssB with RpoS, and the consequent delivery of the RssB-RpoS complex to the ClpXP protein degradation pathway. This is Anti-adapter protein IraD from Escherichia coli (strain SMS-3-5 / SECEC).